Reading from the N-terminus, the 372-residue chain is Heat-inducible transcription repressor HrcA (372 aa).

The segment at Tyr-300–Ile-334 is disordered.

The protein belongs to the HrcA family.

Its function is as follows. Negative regulator of class I heat shock genes (grpE-dnaK-dnaJ and groELS operons). Prevents heat-shock induction of these operons. This Bifidobacterium longum (strain NCC 2705) protein is Heat-inducible transcription repressor HrcA.